Consider the following 410-residue polypeptide: Multidrug resistance protein MdtM (410 aa).

At 1–11 the chain is on the cytoplasmic side; that stretch reads MPRFFARHAAT. Residues 12 to 32 traverse the membrane as a helical segment; that stretch reads LFFPMALILYDFAAYLSTDLI. Topologically, residues 33–48 are periplasmic; the sequence is QPGIINVVRDFNADVS. Residues 49 to 69 form a helical membrane-spanning segment; that stretch reads LAPAAVSLYLAGGMALQWLLG. Topologically, residues 70-78 are cytoplasmic; sequence PLSDRIGRK. Residues 79–99 form a helical membrane-spanning segment; it reads PVLITGALIFTLACAATMFTT. Topologically, residues 100–103 are periplasmic; that stretch reads SMTQ. Residues 104-124 traverse the membrane as a helical segment; it reads FLIARAIQGTSICFIATVGYV. The Cytoplasmic portion of the chain corresponds to 125-140; that stretch reads TVQEAFGQTKGIKLMA. Residues 141 to 161 form a helical membrane-spanning segment; sequence IITSIVLIAPIIGPLSGAALM. The Periplasmic segment spans residues 162 to 167; the sequence is HFVHWK. A helical transmembrane segment spans residues 168 to 188; the sequence is VLFAIIAVMGFISFVGLLLAM. Residues 189–216 are Cytoplasmic-facing; that stretch reads PETVKRGAVPFSAKSVLRDFRNVFCNRL. Residues 217–237 traverse the membrane as a helical segment; it reads FLFGAATISLSYIPMMSWVAV. Residues 238–251 are Periplasmic-facing; it reads SPVILIDAGGLTTS. The chain crosses the membrane as a helical span at residues 252-272; sequence QFAWTQVPVFGAVIVANAIVA. Over 273–282 the chain is Cytoplasmic; sequence RFVKDPTEPR. The helical transmembrane segment at 283 to 303 threads the bilayer; it reads FIWRAVPIQLVGLALLIIGNL. Residues 304–307 lie on the Periplasmic side of the membrane; it reads LSPH. Residues 308 to 328 form a helical membrane-spanning segment; sequence VWLWSVLGTSLYAFGIGLIFP. The Cytoplasmic segment spans residues 329–348; sequence TLFRFTLFSNNLPKGTVSAS. Residues 349 to 369 traverse the membrane as a helical segment; it reads LNMVILMVMSVSVEIGRWLWF. Over 370–373 the chain is Periplasmic; the sequence is NGGR. The chain crosses the membrane as a helical span at residues 374–394; sequence LPFHLLAVVAGVIVVFTLAGL. Topologically, residues 395–410 are cytoplasmic; that stretch reads LNRVRQHQAAELAEEQ.

This sequence belongs to the major facilitator superfamily.

Its subcellular location is the cell inner membrane. Proton-dependent efflux pump. Confers resistance to a broad spectrum of chemically unrelated substrates. In Escherichia coli O157:H7, this protein is Multidrug resistance protein MdtM (mdtM).